The chain runs to 227 residues: 2-C-methyl-D-erythritol 4-phosphate cytidylyltransferase (227 aa).

This sequence belongs to the IspD/TarI cytidylyltransferase family. IspD subfamily.

It carries out the reaction 2-C-methyl-D-erythritol 4-phosphate + CTP + H(+) = 4-CDP-2-C-methyl-D-erythritol + diphosphate. It participates in isoprenoid biosynthesis; isopentenyl diphosphate biosynthesis via DXP pathway; isopentenyl diphosphate from 1-deoxy-D-xylulose 5-phosphate: step 2/6. In terms of biological role, catalyzes the formation of 4-diphosphocytidyl-2-C-methyl-D-erythritol from CTP and 2-C-methyl-D-erythritol 4-phosphate (MEP). This is 2-C-methyl-D-erythritol 4-phosphate cytidylyltransferase from Deinococcus geothermalis (strain DSM 11300 / CIP 105573 / AG-3a).